A 222-amino-acid polypeptide reads, in one-letter code: Ribosomal RNA small subunit methyltransferase G (222 aa).

Residues glycine 84, phenylalanine 89, 141-142 (VE), and arginine 154 contribute to the S-adenosyl-L-methionine site.

This sequence belongs to the methyltransferase superfamily. RNA methyltransferase RsmG family.

The protein resides in the cytoplasm. The enzyme catalyses guanosine(527) in 16S rRNA + S-adenosyl-L-methionine = N(7)-methylguanosine(527) in 16S rRNA + S-adenosyl-L-homocysteine. Functionally, specifically methylates the N7 position of guanine in position 527 of 16S rRNA. This is Ribosomal RNA small subunit methyltransferase G from Bradyrhizobium sp. (strain BTAi1 / ATCC BAA-1182).